The sequence spans 238 residues: DNA repair protein RAD59 (238 aa).

The protein belongs to the RAD52 family. As to quaternary structure, interacts with RAD51 and RAD52.

The protein resides in the nucleus. Involved in the repair of double-strand breaks in DNA during vegetative growth via recombination and single-strand annealing. Anneals complementary single-stranded DNA. This is DNA repair protein RAD59 (RAD59) from Saccharomyces cerevisiae (strain ATCC 204508 / S288c) (Baker's yeast).